The chain runs to 416 residues: MKEIEYVQDLCSRAKKASKVLKQLSSSKKNKVLLSLADLLEKRKAEILLANELDLKDGKEKKLSSALMDRLLLNEKRIFSMASAVREIAALPDPIGEVTRGITLPNGLELVTRRVPLGVVMVIYESRPNVTIDVGALSFKSGNACILRGGSEAFYSNEILIKLFHEILIKEEIDIGSVVFVDKTDRSFMIPFFQQTSLIDIVVPRGGEGLIRFVSENSKIPVVKHDKGVCNLYIDQDADPEKVIPIVINSKVQRPGVCNSTENLILHNGYPFRKELLEALAKEGVELLLDPSSLALYPNGKPVKEQDYLEEFLDLRLSVKTVSSLEEALAFIEKTSSGHTEAIVTEDLNTARIFTNSLDSAALFINCSTRFHDGGEFGLGAEVGISTGKLHVRGPMGLVHLTTTTTYVTGNGQIRG.

It belongs to the gamma-glutamyl phosphate reductase family.

It localises to the cytoplasm. The enzyme catalyses L-glutamate 5-semialdehyde + phosphate + NADP(+) = L-glutamyl 5-phosphate + NADPH + H(+). It functions in the pathway amino-acid biosynthesis; L-proline biosynthesis; L-glutamate 5-semialdehyde from L-glutamate: step 2/2. Catalyzes the NADPH-dependent reduction of L-glutamate 5-phosphate into L-glutamate 5-semialdehyde and phosphate. The product spontaneously undergoes cyclization to form 1-pyrroline-5-carboxylate. This chain is Gamma-glutamyl phosphate reductase, found in Leptospira interrogans serogroup Icterohaemorrhagiae serovar Lai (strain 56601).